An 845-amino-acid chain; its full sequence is Nuclear pore complex protein Nup107 (845 aa).

Disordered regions lie at residues 1–26 (MADS…MPPQ) and 677–702 (QNRP…MASE). Composition is skewed to polar residues over residues 7–26 (PRSS…MPPQ) and 685–694 (TSHAASSQDN).

Belongs to the nucleoporin Nup84/Nup107 family. Part of the nuclear pore complex (NPC). In terms of tissue distribution, expressed in spermatocytes (at protein level).

It is found in the nucleus. The protein resides in the nuclear pore complex. The protein localises to the nucleus envelope. Its subcellular location is the nucleus membrane. It localises to the cytoplasm. It is found in the cytoskeleton. The protein resides in the spindle. The protein localises to the chromosome. Its subcellular location is the nucleus matrix. Its function is as follows. Plays a role in nuclear pore complex (NPC) assembly and maintenance. Required for nuclear import of Mad. Mediates the association between the nuclear pore complex and a subset of active chromatin regions adjacent to lamin-associated domains. Plays a role in double strand break repair by relocalizing the heterochromatic double strand breaks (DSBs) to the nuclear periphery as part of the homologous recombination (HR) repair process. Regulates cytokinesis during spermatocyte meiosis by maintaining type-B lamin Lam localization to the spindle envelope. Regulates female gonad development and oogenesis. This Drosophila melanogaster (Fruit fly) protein is Nuclear pore complex protein Nup107.